The chain runs to 187 residues: Transmembrane protein 11-B, mitochondrial (187 aa).

A run of 2 helical transmembrane segments spans residues 79-95 (TAVL…LALP) and 102-119 (VSLP…LYGI).

The protein belongs to the TMEM11 family.

It is found in the mitochondrion inner membrane. Plays a role in mitochondrial morphogenesis. The sequence is that of Transmembrane protein 11-B, mitochondrial (tmem11-b) from Xenopus laevis (African clawed frog).